A 61-amino-acid chain; its full sequence is Small ribosomal subunit protein uS14 (61 aa).

Positions 24, 27, 40, and 43 each coordinate Zn(2+).

It belongs to the universal ribosomal protein uS14 family. Zinc-binding uS14 subfamily. In terms of assembly, part of the 30S ribosomal subunit. Contacts proteins S3 and S10. It depends on Zn(2+) as a cofactor.

Its function is as follows. Binds 16S rRNA, required for the assembly of 30S particles and may also be responsible for determining the conformation of the 16S rRNA at the A site. The polypeptide is Small ribosomal subunit protein uS14 (Geotalea daltonii (strain DSM 22248 / JCM 15807 / FRC-32) (Geobacter daltonii)).